The chain runs to 125 residues: UPF0593 mitochondrial protein C806.05 (125 aa).

Belongs to the UPF0593 family.

It localises to the mitochondrion. The polypeptide is UPF0593 mitochondrial protein C806.05 (Schizosaccharomyces pombe (strain 972 / ATCC 24843) (Fission yeast)).